The following is a 537-amino-acid chain: Phosphoenolpyruvate carboxykinase (ATP) (537 aa).

3 residues coordinate substrate: Arg-61, Tyr-194, and Lys-200. ATP contacts are provided by residues Lys-200, His-219, and 235 to 243 (GLSGTGKTT). Residues Lys-200 and His-219 each coordinate Mn(2+). Asp-256 is a binding site for Mn(2+). Glu-284, Arg-322, and Thr-448 together coordinate ATP. Substrate is bound at residue Arg-322.

Belongs to the phosphoenolpyruvate carboxykinase (ATP) family. Mn(2+) is required as a cofactor.

Its subcellular location is the cytoplasm. The catalysed reaction is oxaloacetate + ATP = phosphoenolpyruvate + ADP + CO2. The protein operates within carbohydrate biosynthesis; gluconeogenesis. Involved in the gluconeogenesis. Catalyzes the conversion of oxaloacetate (OAA) to phosphoenolpyruvate (PEP) through direct phosphoryl transfer between the nucleoside triphosphate and OAA. This is Phosphoenolpyruvate carboxykinase (ATP) from Bradyrhizobium sp. (strain ORS 278).